The chain runs to 438 residues: Histidinol dehydrogenase (438 aa).

NAD(+) contacts are provided by Tyr-135, Gln-193, and Asn-216. Substrate is bound by residues Ser-243, Gln-265, and His-268. Residues Gln-265 and His-268 each contribute to the Zn(2+) site. Active-site proton acceptor residues include Glu-332 and His-333. Substrate is bound by residues His-333, Asp-366, Glu-420, and His-425. Asp-366 contacts Zn(2+). His-425 provides a ligand contact to Zn(2+).

It belongs to the histidinol dehydrogenase family. Requires Zn(2+) as cofactor.

The catalysed reaction is L-histidinol + 2 NAD(+) + H2O = L-histidine + 2 NADH + 3 H(+). Its pathway is amino-acid biosynthesis; L-histidine biosynthesis; L-histidine from 5-phospho-alpha-D-ribose 1-diphosphate: step 9/9. Catalyzes the sequential NAD-dependent oxidations of L-histidinol to L-histidinaldehyde and then to L-histidine. This chain is Histidinol dehydrogenase, found in Shewanella oneidensis (strain ATCC 700550 / JCM 31522 / CIP 106686 / LMG 19005 / NCIMB 14063 / MR-1).